The primary structure comprises 460 residues: Crocetin glucosyltransferase 2 (460 aa).

Catalysis depends on histidine 19, which acts as the Proton acceptor. Histidine 19 serves as a coordination point for an anthocyanidin. 9 residues coordinate UDP-alpha-D-glucose: threonine 133, glutamine 333, histidine 348, tryptophan 351, asparagine 352, serine 353, glutamate 356, aspartate 372, and glutamine 373.

This sequence belongs to the UDP-glycosyltransferase family. As to expression, mainly expressed in fully developed stigmas.

The catalysed reaction is crocetin + UDP-alpha-D-glucose = beta-D-glucosyl crocetin + UDP. The enzyme catalyses beta-D-glucosyl crocetin + UDP-alpha-D-glucose = bis(beta-D-glucosyl) crocetin + UDP. It catalyses the reaction beta-D-gentiobiosyl crocetin + UDP-alpha-D-glucose = beta-D-gentiobiosyl beta-D-glucosyl crocetin + UDP. In terms of biological role, crocetin glucosyltransferase involved in the synthesis of crocin, one of the apocarotenoids responsible for the color and bitter taste of saffron. The protein is Crocetin glucosyltransferase 2 (GLT2) of Crocus sativus (Saffron).